The primary structure comprises 273 residues: Polyamine aminopropyltransferase (273 aa).

One can recognise a PABS domain in the interval E5–P238. S-methyl-5'-thioadenosine is bound at residue Q34. Positions 65 and 90 each coordinate spermidine. S-methyl-5'-thioadenosine is bound by residues E109 and D140–G141. The active-site Proton acceptor is the D158. D158 to D161 lines the spermidine pocket. Residue P165 participates in S-methyl-5'-thioadenosine binding.

This sequence belongs to the spermidine/spermine synthase family. Homodimer or homotetramer.

The protein resides in the cytoplasm. The catalysed reaction is S-adenosyl 3-(methylsulfanyl)propylamine + putrescine = S-methyl-5'-thioadenosine + spermidine + H(+). The protein operates within amine and polyamine biosynthesis; spermidine biosynthesis; spermidine from putrescine: step 1/1. Catalyzes the irreversible transfer of a propylamine group from the amino donor S-adenosylmethioninamine (decarboxy-AdoMet) to putrescine (1,4-diaminobutane) to yield spermidine. In Thermoplasma acidophilum (strain ATCC 25905 / DSM 1728 / JCM 9062 / NBRC 15155 / AMRC-C165), this protein is Polyamine aminopropyltransferase.